Reading from the N-terminus, the 663-residue chain is uncharacterized protein (663 aa).

Residue 207 to 214 coordinates ATP; that stretch reads GPPGTGKT.

Belongs to the DNA2/NAM7 helicase family.

This is an uncharacterized protein from Methanocaldococcus jannaschii (strain ATCC 43067 / DSM 2661 / JAL-1 / JCM 10045 / NBRC 100440) (Methanococcus jannaschii).